The primary structure comprises 318 residues: Transaldolase (318 aa).

Lys132 (schiff-base intermediate with substrate) is an active-site residue.

It belongs to the transaldolase family. Type 1 subfamily. As to quaternary structure, homodimer.

It is found in the cytoplasm. It carries out the reaction D-sedoheptulose 7-phosphate + D-glyceraldehyde 3-phosphate = D-erythrose 4-phosphate + beta-D-fructose 6-phosphate. The protein operates within carbohydrate degradation; pentose phosphate pathway; D-glyceraldehyde 3-phosphate and beta-D-fructose 6-phosphate from D-ribose 5-phosphate and D-xylulose 5-phosphate (non-oxidative stage): step 2/3. Functionally, transaldolase is important for the balance of metabolites in the pentose-phosphate pathway. The chain is Transaldolase from Shewanella pealeana (strain ATCC 700345 / ANG-SQ1).